We begin with the raw amino-acid sequence, 479 residues long: uncharacterized protein (479 aa).

Transmembrane regions (helical) follow at residues 11–31 (ILMAIPLITFLLPAPDGLSLI), 43–63 (IVGLVLKPYGEPVILLAAIAV), 90–110 (GTTWLIFTAFTLSSAFVITGL), 151–171 (SGGIIFPIINSVVVALGSDPE), 195–215 (IFLTAMAPNALALSLMAPILG), 223–243 (WFLAASVPGLLCLFLIPLICY), 274–294 (KALSVLFVIALFGWIFSNSLH), 295–315 (INATIVAIIVMVLCIVLSIVT), 328–348 (TLVWYGGIIGMSGLLEKSGFF), and 447–467 (WWITGAIIAFGSLIIHLTIGM).

It belongs to the SLC13A/DASS transporter (TC 2.A.47) family. DIT1 subfamily.

It localises to the cell inner membrane. This is an uncharacterized protein from Haemophilus influenzae (strain ATCC 51907 / DSM 11121 / KW20 / Rd).